Reading from the N-terminus, the 306-residue chain is Probable thioesterase atnL (306 aa).

The protein belongs to the lcsJ thioesterase family.

Its function is as follows. Part of the gene cluster that mediates the biosynthesis of aspercryptins, linear lipopeptides built from six amino acids including 2 highly unusual and nonproteogenic amino acids, 2-amino-octanoic acid (2aoa) and 2-amino-dodecanol (2adol). The core structure of aspercryptins is as follows: Ser/Ala-Thr-Ile/Val-2aoa-Asn-2adol. The first step of aspercryptin biosynthesis is the generation of the fatty acid precursors, octanoic and dodecanoic acids, by the FAS subunits atnF and atnM. The fatty acid precursors are likely transformed into the corresponding alpha-amino fatty acids in three steps. First, they are hydroxylated by the cytochrome P450 monooxygenase atnE, then oxidized to the corresponding alpha-keto acids by the NAD(P)-dependent oxidoreductase atnD, and finally converted to the alpha-amino fatty acids by the PLP-dependent aminotransferases atnH or atnJ. the alpha-amino fatty acids, 2-amino-octanoic and 2-amino-dodecanoic acids, are recognized, activated, and covalently tethered to the NRPS atnA by its fourth and sixth adenylation domains. The second module of atnA is the Thr module and contains an epimerase (E) domain responsible for the epimerization of Thr to D-allo-Thr. Additionally, despite atnA having only one epimerase domain, the first amino acid of aspercryptin A1 is D-Ser, suggesting that serine is either loaded directly as D-Ser on the first module or that the epimerase domain in the threonine module epimerizes both L-Ser and L-Thr. After condensation of the hexapeptide of aspercryptin, the C-terminal reductase (TE) domain might be involved in the reductive release and production of the aldehyde hexapeptide. Further reduction would generate aspercryptins. The variety of aspercryptins produced reflects the flexibility of the atnA NRPS, allowing incorporation of alanine instead of serine, valine for isoleucine, and a C10 fatty amino alcohol instead of the C12 version. AtnB seems to be involved in the selectivity for Ile versus Val by the third module. Moreover, type B, C and D aspercryptins have an additional N-terminal cichorine, acetyl and propionyl group respectively. This Emericella nidulans (strain FGSC A4 / ATCC 38163 / CBS 112.46 / NRRL 194 / M139) (Aspergillus nidulans) protein is Probable thioesterase atnL.